The sequence spans 260 residues: MVLIRVLANLLILQLSYAQKASELIIGGDECNINEHRFLVALYTSRSRRFHCSGTLINQEWVLTAANCDRKNIRIKLGMHSKNVTNEDEQTRVPKEKFFCLSSKTYTKWDKDIMLIRLKRPVNDSPHIAPISLPSSPPSVGSVCRIMGWGTISPTKVSYPDVPHCANINLLDYEVCRAAHGGLPATSRTLCAGILEGGKDSCQGDSGGPLICNGQFQGILSWGVHPCGQRLKPGVYTKVSDYTEWIRSIIAGNTDVTCPP.

The signal sequence occupies residues 1–18; that stretch reads MVLIRVLANLLILQLSYA. A propeptide spanning residues 19–24 is cleaved from the precursor; that stretch reads QKASEL. The 227-residue stretch at 25-251 folds into the Peptidase S1 domain; that stretch reads IIGGDECNIN…YTEWIRSIIA (227 aa). 6 disulfides stabilise this stretch: C31-C165, C52-C68, C100-C258, C144-C212, C176-C191, and C202-C227. An N-linked (GlcNAc...) asparagine glycan is attached at N83.

The protein belongs to the peptidase S1 family. Snake venom subfamily. In terms of tissue distribution, expressed by the venom gland.

Its subcellular location is the secreted. In terms of biological role, snake venom serine protease homolog that may act in the hemostasis system of the prey. This chain is Snake venom serine protease homolog, found in Bothrops jararacussu (Jararacussu).